The following is a 772-amino-acid chain: Bromo adjacent homology domain-containing 1 protein (772 aa).

2 disordered regions span residues 1 to 63 (MTHT…RSLV) and 77 to 117 (LENV…PRKR). A Phosphoserine modification is found at serine 8. The segment covering 49-61 (TGRRKNYPLRKRS) has biased composition (basic residues). Serine 101 and serine 121 each carry phosphoserine. 3 disordered regions span residues 131–357 (LLER…PADY), 521–582 (QTVA…RTNG), and 723–743 (PSRK…PHRT). Composition is skewed to basic and acidic residues over residues 147–158 (RGGDPHRSRDRA), 170–182 (RLGD…RDLS), and 189–199 (EGARRDGDPAP). Serine 182 carries the post-translational modification Phosphoserine. At serine 204 the chain carries Phosphoserine. Positions 280–289 (SAPPHGPPTQ) are enriched in pro residues. The segment covering 299–310 (LENPLRPNLPLL) has biased composition (low complexity). Positions 340–352 (FPAPQLSPLPMPG) are enriched in pro residues. Polar residues predominate over residues 536 to 548 (GSKSGLRTGSSCR). Positions 549-580 (HTVRSKAARRPSHPKQPRAQRPRPRRRRRRRT) are enriched in basic residues. Position 580 is a phosphothreonine (threonine 580). A BAH domain is found at 616 to 771 (ETIRVRDTVL…FRHGRILKNP (156 aa)).

Interacts with CBX5 (HP1 alpha), HDAC5, MBD1 and SP1. In terms of processing, ubiquitinated in a FBXO11-dependent manner; leading to degradation.

The protein localises to the nucleus. It localises to the chromosome. In terms of biological role, heterochromatin protein that acts as a transcription repressor and has the ability to promote the formation of large heterochromatic domains. May act by recruiting heterochromatin proteins such as CBX5 (HP1 alpha), HDAC5 and MBD1. Represses IGF2 expression by binding to its CpG-rich P3 promoter and recruiting heterochromatin proteins. This Mus musculus (Mouse) protein is Bromo adjacent homology domain-containing 1 protein (Bahd1).